A 940-amino-acid polypeptide reads, in one-letter code: Fibronectin-binding protein B (940 aa).

The N-terminal stretch at 1-36 (MKSNLRYGIRKHKLGAASVFLGTMIVVGMGQEKEAA) is a signal peptide. Residues 36–111 (AASEQNNTTV…PKVETSRVDL (76 aa)) form a disordered region. Positions 38–92 (SEQNNTTVEESGSSATESKASETQTTTNNVNTIDETQSYSATSTEQPSQSTQVTT) are enriched in polar residues. Positions 162 to 480 (TGTDVTNKVE…AQGDGKDKLK (319 aa)) are fibrinogen/elastin/tropoelastin-binding. 3 disordered regions span residues 676 to 746 (LGYE…NIID), 764 to 878 (IIEE…GKVV), and 892 to 918 (VPTK…NGML). The D-1 repeat unit spans residues 681-718 (GQNSGNQSFEEDTEEDKPKYEQGGNIVDIDFDSVPQIH). One copy of the D-2 repeat lies at 719–756 (GQNNGNQSFEEDTEKDKPKYEQGGNIIDIDFDSVPHIH). The stretch at 757–795 (GFNKHTEIIEEDTNKDKPNYQFGGHNSVDFEEDTLPQVS) is one D-3 repeat. Basic and acidic residues predominate over residues 764–774 (IIEEDTNKDKP). Polar residues predominate over residues 792 to 802 (PQVSGHNEGQQ). The D-4; truncated repeat unit spans residues 796–814 (GHNEGQQTIEEDTTPPIVP). Residues 811–860 (PIVPPTPPTPEVPSEPETPTPPTPEVPSEPETPTPPTPEVPTEPGKPIPP) are compositionally biased toward pro residues. WR repeat units follow at residues 815–828 (PTPP…EPET), 829–842 (PTPP…EPET), and 857–870 (PIPP…KPSK). Residues 904–908 (LPETG) carry the LPXTG sorting signal motif. Threonine 907 bears the Pentaglycyl murein peptidoglycan amidated threonine mark. Residues 908 to 940 (GGEESTNNGMLFGGLFSILGLALLRRNKKNHKA) constitute a propeptide, removed by sortase.

As to quaternary structure, interacts with host PLG; this interaction provides active plasmin on the surface of bacteria cells. Interacts with host histones.

Its subcellular location is the secreted. The protein localises to the cell wall. Multifunctional protein which promotes bacterial attachment to fibrinogen, elastin and fibronectin. Also promotes the accumulation phase and the primary attachment phase of biofilm formation. In addition, protects against the antimicrobial activity of histones. Mechanistically, captures histones and prevents them from reaching the bacterial membrane and simultaneously binds plasminogen, thereby promoting its conversion to plasmin to destroy the bound histones. This Staphylococcus aureus (strain USA300) protein is Fibronectin-binding protein B.